The sequence spans 156 residues: Small ribosomal subunit protein uS7 (156 aa).

Belongs to the universal ribosomal protein uS7 family. As to quaternary structure, part of the 30S ribosomal subunit. Contacts proteins S9 and S11.

In terms of biological role, one of the primary rRNA binding proteins, it binds directly to 16S rRNA where it nucleates assembly of the head domain of the 30S subunit. Is located at the subunit interface close to the decoding center, probably blocks exit of the E-site tRNA. In Janthinobacterium sp. (strain Marseille) (Minibacterium massiliensis), this protein is Small ribosomal subunit protein uS7.